The chain runs to 291 residues: ATP synthase gamma chain (291 aa).

It belongs to the ATPase gamma chain family. As to quaternary structure, F-type ATPases have 2 components, CF(1) - the catalytic core - and CF(0) - the membrane proton channel. CF(1) has five subunits: alpha(3), beta(3), gamma(1), delta(1), epsilon(1). CF(0) has three main subunits: a, b and c.

It is found in the cell inner membrane. Produces ATP from ADP in the presence of a proton gradient across the membrane. The gamma chain is believed to be important in regulating ATPase activity and the flow of protons through the CF(0) complex. The protein is ATP synthase gamma chain of Persephonella marina (strain DSM 14350 / EX-H1).